The primary structure comprises 102 residues: MAKGQSLQDPFLNALRRERVPVSIYLVNGIKLQGQIESFDQFVILLKNTVSQMVYKHAISTVVPSRPVSHHSNNAGGGASNNYHHGSNAQGSTAQQDSEETE.

A Sm domain is found at 9-68 (DPFLNALRRERVPVSIYLVNGIKLQGQIESFDQFVILLKNTVSQMVYKHAISTVVPSRPV). The tract at residues 63-102 (VPSRPVSHHSNNAGGGASNNYHHGSNAQGSTAQQDSEETE) is disordered. The span at 70 to 88 (HHSNNAGGGASNNYHHGSN) shows a compositional bias: low complexity.

It belongs to the Hfq family. As to quaternary structure, homohexamer.

Functionally, RNA chaperone that binds small regulatory RNA (sRNAs) and mRNAs to facilitate mRNA translational regulation in response to envelope stress, environmental stress and changes in metabolite concentrations. Also binds with high specificity to tRNAs. The polypeptide is RNA-binding protein Hfq (Salmonella agona (strain SL483)).